Consider the following 380-residue polypeptide: N5-carboxyaminoimidazole ribonucleotide synthase (380 aa).

Residues arginine 108, lysine 148, 153 to 159 (GYDGKGQ), 183 to 186 (ESWV), glutamate 191, histidine 214, and 268 to 269 (NE) each bind ATP. Residues 112–298 (KKAIQSAGCE…QFEQHIRAVC (187 aa)) form the ATP-grasp domain.

Belongs to the PurK/PurT family. As to quaternary structure, homodimer.

It catalyses the reaction 5-amino-1-(5-phospho-beta-D-ribosyl)imidazole + hydrogencarbonate + ATP = 5-carboxyamino-1-(5-phospho-D-ribosyl)imidazole + ADP + phosphate + 2 H(+). It participates in purine metabolism; IMP biosynthesis via de novo pathway; 5-amino-1-(5-phospho-D-ribosyl)imidazole-4-carboxylate from 5-amino-1-(5-phospho-D-ribosyl)imidazole (N5-CAIR route): step 1/2. Functionally, catalyzes the ATP-dependent conversion of 5-aminoimidazole ribonucleotide (AIR) and HCO(3)(-) to N5-carboxyaminoimidazole ribonucleotide (N5-CAIR). The sequence is that of N5-carboxyaminoimidazole ribonucleotide synthase from Bacillus subtilis (strain 168).